The primary structure comprises 1168 residues: DNA-directed RNA polymerase subunit beta (1168 aa).

This sequence belongs to the RNA polymerase beta chain family. As to quaternary structure, the RNAP catalytic core consists of 2 alpha, 1 beta, 1 beta' and 1 omega subunit. When a sigma factor is associated with the core the holoenzyme is formed, which can initiate transcription.

The catalysed reaction is RNA(n) + a ribonucleoside 5'-triphosphate = RNA(n+1) + diphosphate. In terms of biological role, DNA-dependent RNA polymerase catalyzes the transcription of DNA into RNA using the four ribonucleoside triphosphates as substrates. This Rhodococcus jostii (strain RHA1) protein is DNA-directed RNA polymerase subunit beta.